The sequence spans 293 residues: Small ribosomal subunit protein uS2 (293 aa).

The interval 219 to 293 (IASAKPDEPY…WATPKTEDWA (75 aa)) is disordered.

This sequence belongs to the universal ribosomal protein uS2 family. In terms of assembly, component of the small ribosomal subunit. Mature ribosomes consist of a small (40S) and a large (60S) subunit. The 40S subunit contains about 33 different proteins and 1 molecule of RNA (18S). The 60S subunit contains about 49 different proteins and 3 molecules of RNA (28S, 5.8S and 5S). Interacts with ribosomal protein S21.

It is found in the cytoplasm. Required for the assembly and/or stability of the 40S ribosomal subunit. Required for the processing of the 20S rRNA-precursor to mature 18S rRNA in a late step of the maturation of 40S ribosomal subunits. The protein is Small ribosomal subunit protein uS2 of Hydra viridissima (Green hydra).